The following is a 188-amino-acid chain: Ribosome-recycling factor (188 aa).

It belongs to the RRF family.

The protein resides in the cytoplasm. In terms of biological role, responsible for the release of ribosomes from messenger RNA at the termination of protein biosynthesis. May increase the efficiency of translation by recycling ribosomes from one round of translation to another. The polypeptide is Ribosome-recycling factor (Cereibacter sphaeroides (strain ATCC 17023 / DSM 158 / JCM 6121 / CCUG 31486 / LMG 2827 / NBRC 12203 / NCIMB 8253 / ATH 2.4.1.) (Rhodobacter sphaeroides)).